We begin with the raw amino-acid sequence, 182 residues long: LPS-assembly lipoprotein LptE (182 aa).

The signal sequence occupies residues 1-19 (MRHRILTLLLGLAVLVTAG). Residue Cys20 is the site of N-palmitoyl cysteine attachment. A lipid anchor (S-diacylglycerol cysteine) is attached at Cys20.

The protein belongs to the LptE lipoprotein family. In terms of assembly, component of the lipopolysaccharide transport and assembly complex. Interacts with LptD.

The protein resides in the cell outer membrane. Its function is as follows. Together with LptD, is involved in the assembly of lipopolysaccharide (LPS) at the surface of the outer membrane. Required for the proper assembly of LptD. Binds LPS and may serve as the LPS recognition site at the outer membrane. The chain is LPS-assembly lipoprotein LptE from Photorhabdus laumondii subsp. laumondii (strain DSM 15139 / CIP 105565 / TT01) (Photorhabdus luminescens subsp. laumondii).